A 151-amino-acid chain; its full sequence is UPF0178 protein VSAL_I0701 (151 aa).

Belongs to the UPF0178 family.

The sequence is that of UPF0178 protein VSAL_I0701 from Aliivibrio salmonicida (strain LFI1238) (Vibrio salmonicida (strain LFI1238)).